We begin with the raw amino-acid sequence, 585 residues long: Arginine--tRNA ligase (585 aa).

The 'HIGH' region motif lies at Pro-127 to His-137.

The protein belongs to the class-I aminoacyl-tRNA synthetase family. As to quaternary structure, monomer.

Its subcellular location is the cytoplasm. It carries out the reaction tRNA(Arg) + L-arginine + ATP = L-arginyl-tRNA(Arg) + AMP + diphosphate. This Borreliella burgdorferi (strain ATCC 35210 / DSM 4680 / CIP 102532 / B31) (Borrelia burgdorferi) protein is Arginine--tRNA ligase (argS).